The sequence spans 174 residues: Shikimate kinase 2 (174 aa).

Position 12 to 17 (12 to 17) interacts with ATP; that stretch reads GCGKTT. Thr-16 and Asp-32 together coordinate Mg(2+). Residues Asp-34, Arg-58, and Gly-79 each coordinate substrate. The LID domain stretch occupies residues 112-126; it reads RAYPEDDQRPSLTGK. Residue Arg-120 participates in ATP binding. Arg-139 provides a ligand contact to substrate. Gln-155 contributes to the ATP binding site.

The protein belongs to the shikimate kinase family. AroL subfamily. Monomer. Mg(2+) serves as cofactor.

The protein localises to the cytoplasm. It catalyses the reaction shikimate + ATP = 3-phosphoshikimate + ADP + H(+). Its pathway is metabolic intermediate biosynthesis; chorismate biosynthesis; chorismate from D-erythrose 4-phosphate and phosphoenolpyruvate: step 5/7. Its function is as follows. Catalyzes the specific phosphorylation of the 3-hydroxyl group of shikimic acid using ATP as a cosubstrate. This chain is Shikimate kinase 2, found in Sodalis glossinidius (strain morsitans).